Reading from the N-terminus, the 268-residue chain is Photosystem II 22 kDa protein 1, chloroplastic (268 aa).

The N-terminal 60 residues, 1-60 (MAQSMLVSGANGTVAAASTSRLQPVRPTPFSRLVLSQPSSSLGRAVSVKTVALFGRSKTK), are a transit peptide targeting the chloroplast. 2 consecutive repeat copies span residues 54 to 161 (FGRS…FVDD) and 164 to 268 (VTGL…DDEE). 4 helical membrane passes run 99–119 (VAML…KGIL), 133–153 (AEPL…GALG), 199–219 (LFVG…EIIT), and 234–254 (PINE…IAAI).

This sequence belongs to the ELIP/psbS family. In terms of tissue distribution, expressed at low levels in leaves (at protein level).

It is found in the plastid. Its subcellular location is the chloroplast thylakoid membrane. Involved in high light-mediated energy-dependent nonphotochemical quenching (NPQ, qE) and thermal dissipation (TD) thus regulating energy conversion in photosystem II and protecting from photoinhibition. Also seems to regulate quantum yield of electron transport in fluctuating light conditions. The chain is Photosystem II 22 kDa protein 1, chloroplastic from Oryza sativa subsp. indica (Rice).